We begin with the raw amino-acid sequence, 60 residues long: Cytotoxin 10 (60 aa).

Cystine bridges form between Cys-3–Cys-21, Cys-14–Cys-38, Cys-42–Cys-53, and Cys-54–Cys-59.

The protein belongs to the three-finger toxin family. Short-chain subfamily. Type IA cytotoxin sub-subfamily. Monomer in solution; Homodimer and oligomer in the presence of negatively charged lipids forming a pore with a size ranging between 20 and 30 Angstroms. Expressed by the venom gland.

The protein localises to the secreted. The protein resides in the target cell membrane. Its function is as follows. Shows cytolytic activity on many different cells by forming pore in lipid membranes. In vivo, increases heart rate or kills the animal by cardiac arrest. In addition, it binds to heparin with high affinity, interacts with Kv channel-interacting protein 1 (KCNIP1) in a calcium-independent manner, and binds to integrin alpha-V/beta-3 (ITGAV/ITGB3) with moderate affinity. Has hemolytic activity towards human erythrocytes (EC(50)=0.162 uM) and cytolytic activity towards various cell lines. This is Cytotoxin 10 from Naja naja (Indian cobra).